The sequence spans 108 residues: Phosphoribosyl-ATP pyrophosphatase (108 aa).

Belongs to the PRA-PH family.

It localises to the cytoplasm. It carries out the reaction 1-(5-phospho-beta-D-ribosyl)-ATP + H2O = 1-(5-phospho-beta-D-ribosyl)-5'-AMP + diphosphate + H(+). Its pathway is amino-acid biosynthesis; L-histidine biosynthesis; L-histidine from 5-phospho-alpha-D-ribose 1-diphosphate: step 2/9. In Aromatoleum aromaticum (strain DSM 19018 / LMG 30748 / EbN1) (Azoarcus sp. (strain EbN1)), this protein is Phosphoribosyl-ATP pyrophosphatase.